A 266-amino-acid polypeptide reads, in one-letter code: Oxygen-evolving enhancer protein 2-3, chloroplastic (266 aa).

The N-terminal 80 residues, 1 to 80 (MASTQCFLHH…VGSKVSPADA (80 aa)), are a transit peptide targeting the chloroplast.

It belongs to the PsbP family.

The protein localises to the plastid. It localises to the chloroplast thylakoid membrane. Its function is as follows. May be involved in the regulation of photosystem II. This is Oxygen-evolving enhancer protein 2-3, chloroplastic (PSBP3) from Nicotiana tabacum (Common tobacco).